Here is a 142-residue protein sequence, read N- to C-terminus: Baculoviral IAP repeat-containing protein 5 (142 aa).

The stretch at arginine 18–serine 88 is one BIR repeat. Serine 20 carries the post-translational modification Phosphoserine; by AURKC. Lysine 23 is modified (N6-acetyllysine). The residue at position 34 (threonine 34) is a Phosphothreonine; by CDK1 and CDK15. Threonine 48 carries the phosphothreonine modification. 4 residues coordinate Zn(2+): cysteine 57, cysteine 60, histidine 77, and cysteine 84. 4 positions are modified to N6-acetyllysine: lysine 90, lysine 110, lysine 112, and lysine 115. A Phosphothreonine; by AURKB modification is found at threonine 117. Position 129 is an N6-acetyllysine (lysine 129).

This sequence belongs to the IAP family. As to quaternary structure, monomer or homodimer. Exists as a homodimer in the apo state and as a monomer in the CPC-bound state. The monomer protects cells against apoptosis more efficiently than the dimer. Only the dimeric form is capable of enhancing tubulin stability in cells. When phosphorylated, interacts with LAMTOR5/HBXIP; the resulting complex binds pro-CASP9, as well as active CASP9, but much less efficiently. Component of the chromosomal passenger complex (CPC) composed of at least BIRC5/survivin, CDCA8/borealin, INCENP, AURKB or AURKC; in the complex forms a triple-helix bundle-based subcomplex with INCENP and CDCA8. Interacts with JTB. Interacts (via BIR domain) with histone H3 phosphorylated at 'Thr-3' (H3pT3). Interacts with EVI5. Interacts with GTP-bound RAN in both the S and M phases of the cell cycle. Interacts with USP9X. Interacts with tubulin. Interacts with BIRC2/c-IAP1. The acetylated form at Lys-129 interacts with STAT3. The monomeric form deacetylated at Lys-129 interacts with XPO1/CRM1. The monomeric form interacts with XIAP/BIRC4. Both the dimeric and monomeric form can interact with DIABLO/SMAC. Interacts with BIRC6/bruce. Interacts with FBXL7; this interaction facilitates the polyubiquitination and subsequent proteasomal degradation of BIRC5 by the SCF(FBXL7) E3 ubiquitin-protein ligase complex. Post-translationally, ubiquitinated by the Cul9-RING ubiquitin-protein ligase complex, leading to its degradation. Ubiquitination is required for centrosomal targeting. Deubiquitinated by USP35 or USP38; leading to stabilization. Acetylation at Lys-129 results in its homodimerization, while deacetylation promotes the formation of monomers which heterodimerize with XPO1/CRM1 which facilitates its nuclear export. The acetylated form represses STAT3 transactivation. The dynamic equilibrium between its acetylation and deacetylation at Lys-129 determines its interaction with XPO1/CRM1, its subsequent subcellular localization, and its ability to inhibit STAT3 transactivation. In terms of processing, in vitro phosphorylation at Thr-117 by AURKB prevents interaction with INCENP and localization to mitotic chromosomes. Phosphorylation at Thr-48 by CK2 is critical for its mitotic and anti-apoptotic activities. Phosphorylation at Thr-34 by CDK15 is critical for its anti-apoptotic activity. Phosphorylation at Ser-20 by AURKC is critical for regulation of proper chromosome alignment and segregation, and possibly cytokinesis.

It localises to the cytoplasm. Its subcellular location is the nucleus. It is found in the chromosome. The protein localises to the centromere. The protein resides in the cytoskeleton. It localises to the spindle. Its subcellular location is the kinetochore. It is found in the midbody. Multitasking protein that has dual roles in promoting cell proliferation and preventing apoptosis. Component of a chromosome passage protein complex (CPC) which is essential for chromosome alignment and segregation during mitosis and cytokinesis. Acts as an important regulator of the localization of this complex; directs CPC movement to different locations from the inner centromere during prometaphase to midbody during cytokinesis and participates in the organization of the center spindle by associating with polymerized microtubules. Involved in the recruitment of CPC to centromeres during early mitosis via association with histone H3 phosphorylated at 'Thr-3' (H3pT3) during mitosis. The complex with RAN plays a role in mitotic spindle formation by serving as a physical scaffold to help deliver the RAN effector molecule TPX2 to microtubules. May counteract a default induction of apoptosis in G2/M phase. The acetylated form represses STAT3 transactivation of target gene promoters. May play a role in neoplasia. Inhibitor of CASP3 and CASP7. Essential for the maintenance of mitochondrial integrity and function. The sequence is that of Baculoviral IAP repeat-containing protein 5 (BIRC5) from Pongo abelii (Sumatran orangutan).